The chain runs to 35 residues: Kappa-theraphotoxin-Tb1c (35 aa).

Intrachain disulfides connect C3/C18, C10/C23, and C17/C30.

It belongs to the neurotoxin 10 (Hwtx-1) family. 59 (Tltx) subfamily. Monomer. In terms of tissue distribution, expressed by the venom gland.

The protein resides in the secreted. In terms of biological role, blocks Kv4.2/KCND2 voltage-gated potassium channels probably by shifting the voltage-dependence of channel activation to more depolarized potentials and by binding to the S3-S4 linker region of the voltage sensor domain. This chain is Kappa-theraphotoxin-Tb1c, found in Theraphosa blondi (Goliath birdeating spider).